The following is a 122-amino-acid chain: Defensin-like protein 181 (122 aa).

Residues 1 to 26 form the signal peptide; the sequence is MERIPSLASLVSLLIIFATVVNQTRA. Intrachain disulfides connect Cys29-Cys70, Cys36-Cys55, Cys39-Cys64, Cys43-Cys66, Cys76-Cys122, Cys87-Cys107, Cys92-Cys116, and Cys96-Cys118.

It belongs to the DEFL family.

It is found in the secreted. Its function is as follows. Confers broad-spectrum resistance to pathogens. The protein is Defensin-like protein 181 (PDF3.1) of Arabidopsis thaliana (Mouse-ear cress).